The primary structure comprises 795 residues: MTAFNSLFSLDKKRLKKLQRTLNTINSLKGQMATLSNEELQAKTTEFRKRLVNGETLDDICAEAFAVVREADKRVLGLFPYDVQVIGGLVLHQGNTAEMKTGEGKTLTATMPLYLNALEGKGAMLLTNNSYLAIRDAEEMGKVYRFLGLSVGVGVSDNEEEDRDAATKRAVYSSDIVYSTSSALGFDYLIDNLASSKSQKYMPKLHYAIVDEADAVLLDMAQTPLVISGSPRVQSNLYKIADELILSFEEQVDYYFDKERQEVWIKNQGVREAERYFRIPHFYKQSNRELVRHLNLSLKAHKLFERGKDYVVDDGEIKLLDATNGRVLEGTKLQGGVHQAIEQKEHLNVTPESRAMASITYQNLFRMFTKLAGMTGTGKTAEKEFIEVYDMEVVRIPTNSPVRRIDYPDKIYTTLPEKIHATIEFVKQVHDTGQPILLVAGSVRMSELFSELLLLSGIPHSLLNAQSAVKEAQMIAEAGQKGAVTVATNMAGRGTDIKLGKGVSELGGLAVIGTERMKSQRMDLQLRGRSGRQGDIGFSQFFVSFEDDLMIESGPKWAQDYFRKNRDKVNPEKPKALGQRRFQKLFQQTQEASDGKGESARSQTIEFDSSVQLQREYVYRERNALINGESGHFSPRQIIDTVISSFIAYLDGEVEKEELIFEVNRFIFDNMSYNLQGISKEMSLEEIKNYLFKIADEILREKHNLLGDSFGDFERTAALKAIDEAWIEEVDYLQQLRTVATARQTAQRNPVFEYHKEAYKSYNIMKKEIREQTFRNLLLSEVSFNENGDLQIYFI.

Residues Gln-84, 102-106 (GEGKT), and Asp-496 each bind ATP.

This sequence belongs to the SecA family. As to quaternary structure, monomer and homodimer. Part of the essential Sec protein translocation apparatus which comprises SecA, SecYEG and auxiliary proteins SecDF. Other proteins may also be involved.

Its subcellular location is the cell membrane. It localises to the cytoplasm. The enzyme catalyses ATP + H2O + cellular proteinSide 1 = ADP + phosphate + cellular proteinSide 2.. Its function is as follows. Part of the Sec protein translocase complex. Interacts with the SecYEG preprotein conducting channel. Has a central role in coupling the hydrolysis of ATP to the transfer of proteins into and across the cell membrane, serving as an ATP-driven molecular motor driving the stepwise translocation of polypeptide chains across the membrane. In Streptococcus agalactiae serotype III (strain NEM316), this protein is Protein translocase subunit SecA 2.